We begin with the raw amino-acid sequence, 241 residues long: Accessory protein p30II (241 aa).

Short sequence motifs (nuclear localization signal) lie at residues 73-78 and 91-98; these read RRCRSR and GPRRSRPR. Low complexity-rich tracts occupy residues 79-100 and 107-136; these read CVSP…PRLS and PSST…TSRS. The interval 79-151 is disordered; sequence CVSPRGGAFS…GKHRNSPADT (73 aa). Positions 175-184 match the Mitochondrial targeting signal motif; that stretch reads LRVWRLCTRR.

It belongs to the HTLV-1 accessory protein p30II family. P30II binds to the KIX domains of CREBBP and EP300.

Its subcellular location is the host nucleus. The protein localises to the host nucleolus. It is found in the host mitochondrion inner membrane. P30II is a multifunctional regulator that sequesters EP300/CREBBP and down-regulates CREB-responsive element (CRE) and Tax-responsive element (TRE) mediated transcription. Specifically binds and represses tax/rex mRNA nuclear export. Since Tax and Rex are positive regulators of viral gene expression, their inhibition by p30II reduces virion production, and allows the virus to escape the host immune surveillance and persist latently in an immune-competent host. Functionally, p13II increases mitochondrial permeability to monovalent cations, producing a rapid, membrane potential-dependent influx of potassium. This could involve a channel-forming activity. Interferes with cell proliferation and transformation and promotes apoptosis induced by ceramide and Fas ligand, probably using the Ras signaling. This Human T-cell leukemia virus 1 (strain Japan ATK-1 subtype A) (HTLV-1) protein is Accessory protein p30II.